The following is a 133-amino-acid chain: Capsid protein (133 aa).

This sequence belongs to the Leviviricetes capsid protein family. Homodimer. The capsid protein dimer binds to the viral RNA via an operator hairpin, but also many other RNA sequences in the viral genome.

It localises to the virion. Its function is as follows. Capsid protein self-assembles to form an icosahedral capsid with a T=3 symmetry, about 26 nm in diameter, and consisting of 89 capsid proteins dimers (178 capsid proteins). Involved in viral genome encapsidation through the interaction between a capsid protein dimer and the multiple packaging signals present in the RNA genome. Binding of the capsid proteins to the viral RNA induces a conformational change required for efficient T=3 shell formation. The capsid also contains 1 copy of the A2 maturation protein. In terms of biological role, acts as a translational repressor of viral replicase synthesis late in infection. This latter function is the result of capsid protein interaction with an RNA hairpin which contains the replicase ribosome-binding site. This is Capsid protein from Escherichia coli.